The chain runs to 129 residues: Small ribosomal subunit protein uS11 (129 aa).

Belongs to the universal ribosomal protein uS11 family. Part of the 30S ribosomal subunit. Interacts with proteins S7 and S18. Binds to IF-3.

Its function is as follows. Located on the platform of the 30S subunit, it bridges several disparate RNA helices of the 16S rRNA. Forms part of the Shine-Dalgarno cleft in the 70S ribosome. This Bacillus cytotoxicus (strain DSM 22905 / CIP 110041 / 391-98 / NVH 391-98) protein is Small ribosomal subunit protein uS11.